The primary structure comprises 538 residues: Serine/threonine-protein phosphatase 5 (538 aa).

TPR repeat units lie at residues 13-46 (AEEF…NSNN), 48-80 (VYWA…DSRY), and 81-114 (SKGY…SPND). 2 helical membrane-spanning segments follow: residues 163-183 (SSMP…VVAV) and 185-205 (GFAT…TFWW). Residues Asp-282, His-284, Asp-311, and Asn-343 each contribute to the Mn(2+) site. His-344 (proton donor) is an active-site residue. Positions 392 and 467 each coordinate Mn(2+).

Belongs to the PPP phosphatase family. PP-5 (PP-T) subfamily. As to quaternary structure, interacts with PHYA and PHYB, mostly when they are phosphorylated and in Pfr forms. Mn(2+) is required as a cofactor.

The protein localises to the endoplasmic reticulum membrane. Its subcellular location is the nucleus membrane. It is found in the cytoplasm. The protein resides in the nucleus. It localises to the nucleoplasm. The protein localises to the nucleus speckle. The enzyme catalyses O-phospho-L-seryl-[protein] + H2O = L-seryl-[protein] + phosphate. The catalysed reaction is O-phospho-L-threonyl-[protein] + H2O = L-threonyl-[protein] + phosphate. Its activity is regulated as follows. Activated by arachidonic acid (AA). Its function is as follows. Isoform 2 dephosphorylates phosphorylated phytochromes, with a preference toward Pfr forms, and enhances phytochrome-mediated photoresponses, probably by enhancing their stability and their binding affinity for light signal transducers such as NDPK2. Can use para-nitrophenylphosphate (pNPP) as substrate. The chain is Serine/threonine-protein phosphatase 5 (PAPP5) from Arabidopsis thaliana (Mouse-ear cress).